The primary structure comprises 53 residues: UPF0391 membrane protein PputGB1_0151 (53 aa).

The next 2 helical transmembrane spans lie at 4 to 24 (WAITFLIIAIVAAVLGFGGIA) and 29 to 49 (GIAKILFIVFLVLFVASFFFG).

It belongs to the UPF0391 family.

It is found in the cell membrane. The polypeptide is UPF0391 membrane protein PputGB1_0151 (Pseudomonas putida (strain GB-1)).